Reading from the N-terminus, the 123-residue chain is Prismalin-14 (123 aa).

Positions 1–16 (MRSLLVLLALAACASA) are cleaved as a signal peptide.

In terms of tissue distribution, prismatic layer of shell (at protein level). Expressed primarily in the mantle with highest level in the mantle edge and lower level in the mantle pallium.

Its subcellular location is the secreted. Its function is as follows. May be involved in calcification of the prismatic layer of the shell. This is Prismalin-14 from Margaritifera margaritifera (Freshwater pearl mussel).